A 497-amino-acid chain; its full sequence is Guanosine-5'-triphosphate,3'-diphosphate pyrophosphatase (497 aa).

The protein belongs to the GppA/Ppx family. GppA subfamily.

The enzyme catalyses guanosine 3'-diphosphate 5'-triphosphate + H2O = guanosine 3',5'-bis(diphosphate) + phosphate + H(+). It functions in the pathway purine metabolism; ppGpp biosynthesis; ppGpp from GTP: step 2/2. In terms of biological role, catalyzes the conversion of pppGpp to ppGpp. Guanosine pentaphosphate (pppGpp) is a cytoplasmic signaling molecule which together with ppGpp controls the 'stringent response', an adaptive process that allows bacteria to respond to amino acid starvation, resulting in the coordinated regulation of numerous cellular activities. The polypeptide is Guanosine-5'-triphosphate,3'-diphosphate pyrophosphatase (Vibrio vulnificus (strain YJ016)).